Consider the following 839-residue polypeptide: Phosphatidylinositol-glycan-specific phospholipase D (839 aa).

The first 23 residues, 1–23 (MSAFRFWSGLLMLLGFLCPRSSP), serve as a signal peptide directing secretion. Residues Asn94, Asn271, Asn292, Asn307, and Asn321 are each glycosylated (N-linked (GlcNAc...) asparagine). FG-GAP repeat units follow at residues 365–427 (SSPA…GLPR), 434–496 (KEAH…GQLS), 498–558 (SPNV…YSSR), 562–622 (NVEA…SPGR), 632–692 (QSWF…GSTR), 703–769 (SLLS…TVGD), and 787–839 (QYVL…LGQD). N-linked (GlcNAc...) asparagine glycans are attached at residues Asn500, Asn590, and Asn658.

This sequence belongs to the GPLD1 family. In terms of assembly, monomer. Glycosylated.

It localises to the secreted. It catalyses the reaction a 6-(alpha-D-glucosaminyl)-1-(1,2-diacyl-sn-glycero-3-phospho)-1D-myo-inositol + H2O = 6-(alpha-D-glucosaminyl)-1D-myo-inositol + a 1,2-diacyl-sn-glycero-3-phosphate + H(+). This protein hydrolyzes the inositol phosphate linkage in proteins anchored by phosphatidylinositol glycans (GPI-anchor) thus releasing these proteins from the membrane. In Bos taurus (Bovine), this protein is Phosphatidylinositol-glycan-specific phospholipase D (GPLD1).